The chain runs to 482 residues: Major cardiolipin synthase ClsA (482 aa).

A run of 2 helical transmembrane segments spans residues 3–23 and 34–54; these read ISSILLSLFFILNILLAIIVI and WAWLLVLFFIPVLGFILYLLF. 2 consecutive PLD phosphodiesterase domains span residues 217-244 and 395-422; these read LNYRNHRKLVIIDGMTGYVGGFNVGDEY and DNGFIHAKTIVVDDEIASVGTANIDVRS. Catalysis depends on residues His-222, Lys-224, Asp-229, His-400, Lys-402, and Asp-407.

The protein belongs to the phospholipase D family. Cardiolipin synthase subfamily.

The protein localises to the cell membrane. It carries out the reaction 2 a 1,2-diacyl-sn-glycero-3-phospho-(1'-sn-glycerol) = a cardiolipin + glycerol. Functionally, catalyzes the reversible phosphatidyl group transfer from one phosphatidylglycerol molecule to another to form cardiolipin (CL) (diphosphatidylglycerol) and glycerol. The polypeptide is Major cardiolipin synthase ClsA (clsA) (Bacillus subtilis (strain 168)).